A 124-amino-acid polypeptide reads, in one-letter code: Insulin growth factor-like family member 4 (124 aa).

The first 19 residues, 1–19 (MVPRISAAIFIFELLGSNS), serve as a signal peptide directing secretion. 2 N-linked (GlcNAc...) asparagine glycosylation sites follow: Asn-57 and Asn-84.

The protein belongs to the IGFL family. Detected in the cerebellum.

The protein localises to the secreted. This Homo sapiens (Human) protein is Insulin growth factor-like family member 4 (IGFL4).